The sequence spans 214 residues: tRNA (guanine-N(7)-)-methyltransferase (214 aa).

Residues glutamate 43, glutamate 68, aspartate 95, and aspartate 117 each contribute to the S-adenosyl-L-methionine site. Residue aspartate 117 is part of the active site. Residues lysine 121, aspartate 153, and 190–193 contribute to the substrate site; that span reads TEYE.

It belongs to the class I-like SAM-binding methyltransferase superfamily. TrmB family.

It catalyses the reaction guanosine(46) in tRNA + S-adenosyl-L-methionine = N(7)-methylguanosine(46) in tRNA + S-adenosyl-L-homocysteine. Its pathway is tRNA modification; N(7)-methylguanine-tRNA biosynthesis. Functionally, catalyzes the formation of N(7)-methylguanine at position 46 (m7G46) in tRNA. The protein is tRNA (guanine-N(7)-)-methyltransferase of Staphylococcus aureus (strain USA300).